Here is a 92-residue protein sequence, read N- to C-terminus: Small ribosomal subunit protein bS20 (92 aa).

Positions 1-23 (MANTTSAKKATRKIARRTDVNKA) are disordered.

It belongs to the bacterial ribosomal protein bS20 family.

Binds directly to 16S ribosomal RNA. The polypeptide is Small ribosomal subunit protein bS20 (Rhizobium etli (strain CIAT 652)).